We begin with the raw amino-acid sequence, 214 residues long: ATP synthase subunit a (214 aa).

6 consecutive transmembrane segments (helical) span residues 9–29 (LDGM…VFMI), 64–84 (IMMV…TYGI), 88–108 (LWVN…SGYI), 121–141 (SGAP…SIMI), 150–170 (LVAN…VLSS), and 182–202 (LIMV…AYIF).

Belongs to the ATPase A chain family. In terms of assembly, F-type ATPases have 2 components, CF(1) - the catalytic core - and CF(0) - the membrane proton channel. CF(1) has five subunits: alpha(3), beta(3), gamma(1), delta(1), epsilon(1). CF(0) has three main subunits: a, b and c.

Its subcellular location is the mitochondrion inner membrane. Functionally, mitochondrial membrane ATP synthase (F(1)F(0) ATP synthase or Complex V) produces ATP from ADP in the presence of a proton gradient across the membrane which is generated by electron transport complexes of the respiratory chain. F-type ATPases consist of two structural domains, F(1) - containing the extramembraneous catalytic core and F(0) - containing the membrane proton channel, linked together by a central stalk and a peripheral stalk. During catalysis, ATP synthesis in the catalytic domain of F(1) is coupled via a rotary mechanism of the central stalk subunits to proton translocation. Key component of the proton channel; it may play a direct role in the translocation of protons across the membrane. The sequence is that of ATP synthase subunit a (ATP6) from Albinaria caerulea (Land snail).